A 218-amino-acid polypeptide reads, in one-letter code: NAD(P)H-hydrate epimerase (218 aa).

Positions 9–215 (MKKIDQYAID…DIGIPQKAIR (207 aa)) constitute a YjeF N-terminal domain. 55–59 (NNGAD) provides a ligand contact to (6S)-NADPHX. N56 and D127 together coordinate K(+). (6S)-NADPHX-binding positions include 131 to 137 (GTGLNRT) and D160. S163 provides a ligand contact to K(+).

Belongs to the NnrE/AIBP family. Requires K(+) as cofactor.

It catalyses the reaction (6R)-NADHX = (6S)-NADHX. The enzyme catalyses (6R)-NADPHX = (6S)-NADPHX. Its function is as follows. Catalyzes the epimerization of the S- and R-forms of NAD(P)HX, a damaged form of NAD(P)H that is a result of enzymatic or heat-dependent hydration. This is a prerequisite for the S-specific NAD(P)H-hydrate dehydratase to allow the repair of both epimers of NAD(P)HX. This Anaerococcus prevotii (strain ATCC 9321 / DSM 20548 / JCM 6508 / NCTC 11806 / PC1) (Peptostreptococcus prevotii) protein is NAD(P)H-hydrate epimerase.